We begin with the raw amino-acid sequence, 782 residues long: Zinc finger and SCAN domain-containing protein 10 (782 aa).

The interval 1–37 (MLAEPVPDALEQEHPGAVKLEEDEVGEEDPRLAESRP) is disordered. One can recognise an SCAN box domain in the interval 1–71 (MLAEPVPDAL…GRLRELCNHW (71 aa)). Basic and acidic residues-rich tracts occupy residues 11–20 (EQEHPGAVKL) and 28–37 (EDPRLAESRP). Ser-160 and Ser-206 each carry phosphoserine. Disordered regions lie at residues 197–233 (LAPS…ENSR) and 290–321 (SQTE…TPAD). 14 consecutive C2H2-type zinc fingers follow at residues 292–315 (TEKP…STGW), 321–343 (DGSE…EMQF), 349–371 (GVNF…NLQP), 377–399 (SFRC…HMRT), 421–443 (LTKH…NQGF), 467–489 (EGKT…TFKR), 495–517 (RHLR…SLSS), 523–545 (PYVC…HTRR), 551–573 (RPFS…SHQQ), 579–601 (KPHA…RHLL), 607–629 (RPYH…RHVR), 635–657 (KPCR…RHQR), 669–691 (ICGH…TGER), and 697–719 (TCGR…TGSK). Over residues 302-313 (LTQTVGQETSST) the composition is skewed to polar residues. Gln-485 carries the N5-methylglutamine modification. The interval 491-522 (SSLKRHLRNHAKDKDHLSSEDPGSLSSSQESN) is disordered. Residues 500–509 (HAKDKDHLSS) are compositionally biased toward basic and acidic residues. Over residues 510–521 (EDPGSLSSSQES) the composition is skewed to low complexity.

In terms of assembly, interacts with POU5F1/OCT4 and SOX2. Post-translationally, methylated at Gln-485 by N6AMT1. As to expression, embryonic stem (ES) cell-specific. Not expressed in adult, except in testis.

The protein resides in the nucleus. In terms of biological role, embryonic stem (ES) cell-specific transcription factor required to maintain ES cell pluripotency. Can both activate and /or repress expression of target genes, depending on the context. Specifically binds the 5'-[GA]CGCNNGCG[CT]-3' DNA consensus sequence. Regulates expression of POU5F1/OCT4, ZSCAN4 and ALYREF/THOC4. In Mus musculus (Mouse), this protein is Zinc finger and SCAN domain-containing protein 10 (Zscan10).